The sequence spans 620 residues: Chaperone protein HscA homolog (620 aa).

It belongs to the heat shock protein 70 family.

Functionally, chaperone involved in the maturation of iron-sulfur cluster-containing proteins. Has a low intrinsic ATPase activity which is markedly stimulated by HscB. In Bordetella pertussis (strain Tohama I / ATCC BAA-589 / NCTC 13251), this protein is Chaperone protein HscA homolog.